The sequence spans 301 residues: Phosphatidylglycerol--prolipoprotein diacylglyceryl transferase (301 aa).

4 consecutive transmembrane segments (helical) span residues 10-30 (IAFS…LASF), 57-77 (LLFY…MLFY), 92-112 (VWEG…AVAW), and 119-139 (LQMF…LGFG). Arginine 140 serves as a coordination point for a 1,2-diacyl-sn-glycero-3-phospho-(1'-sn-glycerol). 3 helical membrane passes run 202 to 222 (PSQL…LWLF), 230 to 250 (YAVS…VEFV), and 264 to 284 (LTRG…LFWL).

It belongs to the Lgt family.

It is found in the cell inner membrane. The enzyme catalyses L-cysteinyl-[prolipoprotein] + a 1,2-diacyl-sn-glycero-3-phospho-(1'-sn-glycerol) = an S-1,2-diacyl-sn-glyceryl-L-cysteinyl-[prolipoprotein] + sn-glycerol 1-phosphate + H(+). The protein operates within protein modification; lipoprotein biosynthesis (diacylglyceryl transfer). In terms of biological role, catalyzes the transfer of the diacylglyceryl group from phosphatidylglycerol to the sulfhydryl group of the N-terminal cysteine of a prolipoprotein, the first step in the formation of mature lipoproteins. This Xylella fastidiosa (strain 9a5c) protein is Phosphatidylglycerol--prolipoprotein diacylglyceryl transferase.